Here is a 109-residue protein sequence, read N- to C-terminus: Cell division suppressor protein YneA (109 aa).

Positions 39-90 (SEVNVSEGDSLWALADQYAGKSDMAKADFVSWVEKENNLADGHVEAGDSVVI) constitute a LysM domain.

Belongs to the YneA family.

The protein localises to the cytoplasm. Inhibits cell division during the SOS response. Affects a later stage of the cell division protein assembly, after the assembly of the Z ring, by probably suppressing recruitment of FtsL and/or DivIC to the division machinery. This chain is Cell division suppressor protein YneA, found in Listeria monocytogenes serotype 4b (strain CLIP80459).